A 240-amino-acid chain; its full sequence is Ribosomal RNA large subunit methyltransferase E (240 aa).

The disordered stretch occupies residues 1–28 (MSSSPRSPDARPLKVRVKSARTRSSSSQ). Positions 80, 82, 103, 119, and 143 each coordinate S-adenosyl-L-methionine. Lys-183 acts as the Proton acceptor in catalysis.

The protein belongs to the class I-like SAM-binding methyltransferase superfamily. RNA methyltransferase RlmE family.

It localises to the cytoplasm. The catalysed reaction is uridine(2552) in 23S rRNA + S-adenosyl-L-methionine = 2'-O-methyluridine(2552) in 23S rRNA + S-adenosyl-L-homocysteine + H(+). Its function is as follows. Specifically methylates the uridine in position 2552 of 23S rRNA at the 2'-O position of the ribose in the fully assembled 50S ribosomal subunit. The polypeptide is Ribosomal RNA large subunit methyltransferase E (Azorhizobium caulinodans (strain ATCC 43989 / DSM 5975 / JCM 20966 / LMG 6465 / NBRC 14845 / NCIMB 13405 / ORS 571)).